The chain runs to 115 residues: T cell receptor beta variable 11-2 (115 aa).

Positions 1–21 (MGTRLLCWAALCLLGAELTEA) are cleaved as a signal peptide. An Ig-like domain is found at 22–115 (GVAQSPRYKI…SAVYLCASSL (94 aa)). The cysteines at positions 42 and 111 are disulfide-linked.

In terms of assembly, alpha-beta TR is a heterodimer composed of an alpha and beta chain; disulfide-linked. The alpha-beta TR is associated with the transmembrane signaling CD3 coreceptor proteins to form the TR-CD3 (TcR or TCR). The assembly of alpha-beta TR heterodimers with CD3 occurs in the endoplasmic reticulum where a single alpha-beta TR heterodimer associates with one CD3D-CD3E heterodimer, one CD3G-CD3E heterodimer and one CD247 homodimer forming a stable octameric structure. CD3D-CD3E and CD3G-CD3E heterodimers preferentially associate with TR alpha and TR beta chains, respectively. The association of the CD247 homodimer is the last step of TcR assembly in the endoplasmic reticulum and is required for transport to the cell surface.

It localises to the cell membrane. In terms of biological role, v region of the variable domain of T cell receptor (TR) beta chain that participates in the antigen recognition. Alpha-beta T cell receptors are antigen specific receptors which are essential to the immune response and are present on the cell surface of T lymphocytes. Recognize peptide-major histocompatibility (MH) (pMH) complexes that are displayed by antigen presenting cells (APC), a prerequisite for efficient T cell adaptive immunity against pathogens. Binding of alpha-beta TR to pMH complex initiates TR-CD3 clustering on the cell surface and intracellular activation of LCK that phosphorylates the ITAM motifs of CD3G, CD3D, CD3E and CD247 enabling the recruitment of ZAP70. In turn ZAP70 phosphorylates LAT, which recruits numerous signaling molecules to form the LAT signalosome. The LAT signalosome propagates signal branching to three major signaling pathways, the calcium, the mitogen-activated protein kinase (MAPK) kinase and the nuclear factor NF-kappa-B (NF-kB) pathways, leading to the mobilization of transcription factors that are critical for gene expression and essential for T cell growth and differentiation. The T cell repertoire is generated in the thymus, by V-(D)-J rearrangement. This repertoire is then shaped by intrathymic selection events to generate a peripheral T cell pool of self-MH restricted, non-autoaggressive T cells. Post-thymic interaction of alpha-beta TR with the pMH complexes shapes TR structural and functional avidity. This is T cell receptor beta variable 11-2 from Homo sapiens (Human).